We begin with the raw amino-acid sequence, 248 residues long: Phosphoglycerate mutase (248 aa).

Residues 8–15, 21–22, arginine 60, 87–90, lysine 98, 114–115, and 183–184 contribute to the substrate site; these read RHGQSEWN, TG, ERHY, RR, and GN. Histidine 9 functions as the Tele-phosphohistidine intermediate in the catalytic mechanism. Glutamate 87 (proton donor/acceptor) is an active-site residue.

The protein belongs to the phosphoglycerate mutase family. BPG-dependent PGAM subfamily.

It localises to the cytoplasm. The catalysed reaction is (2R)-2-phosphoglycerate = (2R)-3-phosphoglycerate. Its pathway is carbohydrate degradation; glycolysis; pyruvate from D-glyceraldehyde 3-phosphate: step 3/5. This is Phosphoglycerate mutase (GPM1) from Candida albicans (strain SC5314 / ATCC MYA-2876) (Yeast).